Reading from the N-terminus, the 407-residue chain is Cation efflux system protein CusB (407 aa).

Positions 1-28 are cleaved as a signal peptide; sequence MKKIALIIGSMIAGGIISAAGFTWVAKA.

This sequence belongs to the membrane fusion protein (MFP) (TC 8.A.1) family. As to quaternary structure, the cus efflux system is composed of CusA, CusB, CusC and CusF.

Functionally, part of a cation efflux system that mediates resistance to copper and silver. This is Cation efflux system protein CusB (cusB) from Escherichia coli (strain K12).